The following is a 391-amino-acid chain: Putative gustatory receptor 98a (391 aa).

Over 1 to 31 the chain is Cytoplasmic; sequence MEQMSGELHAASLLYMRRLMKCLGMLPFGQN. The helical transmembrane segment at 32 to 52 threads the bilayer; sequence LFSKGFCYVLLFVSLGFSSYW. Residues 53–74 are Extracellular-facing; that stretch reads RFSFDYEFDYDFLNDRFSSTID. A helical transmembrane segment spans residues 75 to 95; it reads LSNFVALVLGHAIIVLELLWG. At 96–128 the chain is on the cytoplasmic side; sequence NCSKDVDRQLQAIHSQIKLQLGTSNSTDRVRRY. Residues 129-149 form a helical membrane-spanning segment; the sequence is CNWIYGSLIIRWLIFIVVTIY. Topologically, residues 150-173 are extracellular; the sequence is SNRALTINATYSELVFLARFSEFT. Asparagine 157 carries an N-linked (GlcNAc...) asparagine glycan. Residues 174-194 form a helical membrane-spanning segment; it reads LYCAVILFIYQELIVGGSNVL. The Cytoplasmic portion of the chain corresponds to 195-239; that stretch reads DELYRTRYEMWSIRRLSLQKLAKLQAIHNSLWQAIRCLECYFQLS. The helical transmembrane segment at 240-260 threads the bilayer; that stretch reads LITLLMKFFIDTSALPYWLYL. The Extracellular portion of the chain corresponds to 261-272; the sequence is SRVEHTRVAVQH. A helical transmembrane segment spans residues 273–293; it reads YVATVECIKLLEIVVPCYLCT. The Cytoplasmic segment spans residues 294–347; sequence RCDAMQRKFLSMFYTVTTDRRSSQLNAALRSLNLQLSQEKYKFSAGGMVDINTE. The chain crosses the membrane as a helical span at residues 348-368; it reads MLGKFFFGMISYIVICIQFSI. Topologically, residues 369-391 are extracellular; it reads NFRAKKMSNEQMSQNITSTSAPI. An N-linked (GlcNAc...) asparagine glycan is attached at asparagine 383.

Belongs to the insect chemoreceptor superfamily. Gustatory receptor (GR) family. Gr2a subfamily.

The protein localises to the cell membrane. Functionally, probable gustatory receptor which mediates acceptance or avoidance behavior, depending on its substrates. In Drosophila melanogaster (Fruit fly), this protein is Putative gustatory receptor 98a (Gr98a).